The following is a 298-amino-acid chain: tRNA dimethylallyltransferase (298 aa).

10 to 17 (GATATGKS) provides a ligand contact to ATP. 12–17 (TATGKS) contacts substrate. Residues 35-38 (DSRQ) form an interaction with substrate tRNA region.

Belongs to the IPP transferase family. In terms of assembly, monomer. Mg(2+) serves as cofactor.

The catalysed reaction is adenosine(37) in tRNA + dimethylallyl diphosphate = N(6)-dimethylallyladenosine(37) in tRNA + diphosphate. Catalyzes the transfer of a dimethylallyl group onto the adenine at position 37 in tRNAs that read codons beginning with uridine, leading to the formation of N6-(dimethylallyl)adenosine (i(6)A). The polypeptide is tRNA dimethylallyltransferase (Picosynechococcus sp. (strain ATCC 27264 / PCC 7002 / PR-6) (Agmenellum quadruplicatum)).